The following is a 291-amino-acid chain: Verruculogen synthase (291 aa).

Y68 is an active-site residue.

The protein belongs to the PhyH family. Homodimer. The cofactor is Fe cation.

The catalysed reaction is fumitremorgin B + 2-oxoglutarate + AH2 + 2 O2 = verruculogen + succinate + A + CO2 + H2O. The protein operates within mycotoxin biosynthesis. Its function is as follows. Verruculogen synthase; part of the gene cluster that mediates the biosynthesis of fumitremorgins, indole alkaloids that carry not only intriguing chemical structures, but also interesting biological and pharmacological activities. The biosynthesis of fumitremorgin-type alkaloids begins by condensation of the two amino acids L-tryptophan and L-proline to brevianamide F, catalyzed by the non-ribosomal peptide synthetase ftmA. Brevianamide F is then prenylated by the prenyltransferase ftmPT1/ftmB in the presence of dimethylallyl diphosphate, resulting in the formation of tryprostatin B. The three cytochrome P450 monooxygenases, ftmP450-1/ftmC, ftmP450-2/ftmE and ftmP450-3/FtmG, are responsible for the conversion of tryprostatin B to 6-hydroxytryprostatin B, tryprostatin A to fumitremorgin C and fumitremorgin C to 12,13-dihydroxyfumitremorgin C, respectively. The putative methyltransferase ftmMT/ftmD is expected for the conversion of 6-hydroxytryprostatin B to tryprostatin A. FtmPT2/FtmH catalyzes the prenylation of 12,13-dihydroxyfumitre-morgin C in the presence of dimethylallyl diphosphate, resulting in the formation of fumitremorgin B. Fumitremorgin B is further converted to verruculogen by ftmOx1/ftmF via the insertion of an endoperoxide bond between the two prenyl moieties. In some fungal species, verruculogen is further converted to fumitremorgin A, but the enzymes involved in this step have not been identified yet. The sequence is that of Verruculogen synthase from Aspergillus fumigatus (Neosartorya fumigata).